The following is a 216-amino-acid chain: Urease operon 23 kDa accessory protein (216 aa).

Its function is as follows. Involved in the expression of hydrogenase activity. May be a regulatory gene affecting the expression of the hydrogenase operon or could be involved in the process of nickel incorporation into the hydrogenase apoenzyme. This is Urease operon 23 kDa accessory protein from Rhizobium meliloti (strain 1021) (Ensifer meliloti).